The chain runs to 341 residues: DnaJ homolog subfamily C member 22 (341 aa).

The TM2 domain occupies 3–50; that stretch reads KGLLVTYALWAVGGPAGLHHLYLGRDSHALLWMLTLGGGGLGWLWEFW. Transmembrane regions (helical) follow at residues 5–25, 30–50, 81–101, 105–125, 135–155, 185–205, and 218–238; these read LLVT…HLYL, HALL…WEFW, FAAQ…SLSS, FYIV…AAVG, LGAA…ILPI, LGLA…CNTA, and FLNW…VLLL. The J domain occupies 277–341; the sequence is LAYQVLGLSE…QPRKPRGSRR (65 aa).

The protein localises to the membrane. Its function is as follows. May function as a co-chaperone. The protein is DnaJ homolog subfamily C member 22 (DNAJC22) of Pongo abelii (Sumatran orangutan).